The sequence spans 268 residues: Glucosamine-6-phosphate deaminase (268 aa).

Catalysis depends on Asp-72, which acts as the Proton acceptor; for enolization step. Asp-141 functions as the For ring-opening step in the catalytic mechanism. Residue His-143 is the Proton acceptor; for ring-opening step of the active site. Glu-148 (for ring-opening step) is an active-site residue.

Belongs to the glucosamine/galactosamine-6-phosphate isomerase family. NagB subfamily.

The catalysed reaction is alpha-D-glucosamine 6-phosphate + H2O = beta-D-fructose 6-phosphate + NH4(+). The protein operates within amino-sugar metabolism; N-acetylneuraminate degradation; D-fructose 6-phosphate from N-acetylneuraminate: step 5/5. Allosterically activated by N-acetylglucosamine 6-phosphate (GlcNAc6P). In terms of biological role, catalyzes the reversible isomerization-deamination of glucosamine 6-phosphate (GlcN6P) to form fructose 6-phosphate (Fru6P) and ammonium ion. This Borrelia garinii subsp. bavariensis (strain ATCC BAA-2496 / DSM 23469 / PBi) (Borreliella bavariensis) protein is Glucosamine-6-phosphate deaminase.